The chain runs to 347 residues: MDFELEPTLESIVEHDSLKWIFVGGKGGVGKTTTSSSIAVQLALSKPNDQFLLISTDPAHNLSDAFCQKFGKDARPVEGLPNLSCMEIDPEAAMSDLQQQASQYNNDPSDPMKNIMNDMTGSIPGIDEALSFMEVLKHIKNQKASDGDSDEKTVAYKTIIFDTAPTGHTLRFLQLPATLEKLLGKFKQLSGKLGPMLNMLGGGQQQDIFEKMNEIQKNVSEVNEQFTNPDLTTFVCVCISEFLSLYETERMIQELVSYNMDVNSIVVNQLLFADNDGSCKRCASRWKMQQKYLDQMAELYEDYHVVKMPLLGTEVRGIDNLKKFSKFLLSPYDPEKDGSLVFDMEEK.

ATP is bound at residue 26-33 (KGGVGKTT). Asp57 is a catalytic residue. Residues Glu241 and Asn268 each contribute to the ATP site. Residues Cys279 and Cys282 each coordinate Zn(2+).

The protein belongs to the arsA ATPase family. As to quaternary structure, homodimer. Component of the Golgi to ER traffic (GET) complex, which is composed of GET1, GET2 and GET3. Within the complex, GET1 and GET2 form a heterotetramer which is stabilized by phosphatidylinositol binding and which binds to the GET3 homodimer. Interacts with the chloride channel protein GEF1.

It localises to the cytoplasm. The protein resides in the endoplasmic reticulum. It is found in the golgi apparatus. Its function is as follows. ATPase required for the post-translational delivery of tail-anchored (TA) proteins to the endoplasmic reticulum. Recognizes and selectively binds the transmembrane domain of TA proteins in the cytosol. This complex then targets to the endoplasmic reticulum by membrane-bound receptors GET1 and GET2, where the tail-anchored protein is released for insertion. This process is regulated by ATP binding and hydrolysis. ATP binding drives the homodimer towards the closed dimer state, facilitating recognition of newly synthesized TA membrane proteins. ATP hydrolysis is required for insertion. Subsequently, the homodimer reverts towards the open dimer state, lowering its affinity for the GET1-GET2 receptor, and returning it to the cytosol to initiate a new round of targeting. Cooperates with the HDEL receptor ERD2 to mediate the ATP-dependent retrieval of resident ER proteins that contain a C-terminal H-D-E-L retention signal from the Golgi to the ER. Involved in low-level resistance to the oxyanions arsenite and arsenate, and in heat tolerance. This Meyerozyma guilliermondii (strain ATCC 6260 / CBS 566 / DSM 6381 / JCM 1539 / NBRC 10279 / NRRL Y-324) (Yeast) protein is ATPase GET3.